The primary structure comprises 254 residues: Thiamine thiazole synthase (254 aa).

NAD(+) contacts are provided by residues serine 36, 55–56 (EK), glycine 63, valine 127, and 154–156 (HVD). Fe cation is bound by residues aspartate 156 and histidine 171. Methionine 219 serves as a coordination point for NAD(+). Arginine 229 contacts glycine.

The protein belongs to the THI4 family. Homooctamer; tetramer of dimers. Requires Fe(2+) as cofactor.

It carries out the reaction hydrogen sulfide + glycine + NAD(+) = ADP-5-ethyl-4-methylthiazole-2-carboxylate + nicotinamide + 3 H2O + H(+). Its pathway is cofactor biosynthesis; thiamine diphosphate biosynthesis. Involved in the biosynthesis of the thiazole moiety of thiamine. Catalyzes the conversion of NAD and glycine to adenosine diphosphate 5-(2-hydroxyethyl)-4-methylthiazole-2-carboxylate (ADT), an adenylated thiazole intermediate, using free sulfide as a source of sulfur. This is Thiamine thiazole synthase from Methanoculleus marisnigri (strain ATCC 35101 / DSM 1498 / JR1).